The chain runs to 302 residues: NAD kinase 2 (302 aa).

Catalysis depends on Asp-78, which acts as the Proton acceptor. Residues 78-79 (DG), 152-153 (NE), Asp-182, 193-198 (TAYSLS), and Ala-217 contribute to the NAD(+) site.

The protein belongs to the NAD kinase family. A divalent metal cation is required as a cofactor.

The protein resides in the cytoplasm. The catalysed reaction is NAD(+) + ATP = ADP + NADP(+) + H(+). In terms of biological role, involved in the regulation of the intracellular balance of NAD and NADP, and is a key enzyme in the biosynthesis of NADP. Catalyzes specifically the phosphorylation on 2'-hydroxyl of the adenosine moiety of NAD to yield NADP. This chain is NAD kinase 2, found in Prochlorococcus marinus (strain SARG / CCMP1375 / SS120).